The sequence spans 659 residues: ATP-binding cassette sub-family D member 3 (659 aa).

An interaction with PEX19 region spans residues 1–61 (MAAFSKYLTA…GKKERAVVDK (61 aa)). The N-linked (GlcNAc...) asparagine glycan is linked to N12. The residue at position 61 (K61) is an N6-acetyllysine. The helical transmembrane segment at 84–104 (GYLLLIAVMLVSRTYCDVWMI) threads the bilayer. One can recognise an ABC transmembrane type-1 domain in the interval 85 to 372 (YLLLIAVMLV…MLLRMSQALG (288 aa)). An N-linked (GlcNAc...) asparagine glycan is attached at N106. Residues 126–146 (LFNFIAAMPLISLVNNFLKYG) form a helical membrane-spanning segment. N-linked (GlcNAc...) asparagine glycosylation occurs at N206. Residues 224 to 244 (AIGAQGPASMMAYLLVSGLFL) traverse the membrane as a helical segment. An N6-acetyllysine modification is found at K260. Residues 313 to 333 (MGFIDSIIAKYVATVVGYLVV) traverse the membrane as a helical segment. Residue K399 is modified to N6-acetyllysine. A Phosphoserine modification is found at S424. In terms of domain architecture, ABC transporter spans 434–659 (INTDNIIKFD…ITEDTVEFGS (226 aa)). 473-480 (GPNGCGKS) contacts ATP. K533 is subject to N6-acetyllysine. S659 carries the phosphoserine modification.

The protein belongs to the ABC transporter superfamily. ABCD family. Peroxisomal fatty acyl CoA transporter (TC 3.A.1.203) subfamily. Homodimers. Can form heterodimers with ABCD1 and ABCD2. Dimerization is necessary to form an active transporter. Interacts with PEX19; mediates the targeting of ABCD3 to peroxisomes. Post-translationally, ubiquitinated by PEX2 during pexophagy in response to starvation, leading to its degradation.

The protein resides in the peroxisome membrane. The enzyme catalyses a very long-chain fatty acyl-CoA + H2O = a very long-chain fatty acid + CoA + H(+). It catalyses the reaction a very long-chain fatty acid(in) + ATP + H2O = a very long-chain fatty acid(out) + ADP + phosphate + H(+). It carries out the reaction a long-chain fatty acyl-CoA + H2O = a long-chain fatty acid + CoA + H(+). The catalysed reaction is a long-chain fatty acid(in) + ATP + H2O = a long-chain fatty acid(out) + ADP + phosphate + H(+). The enzyme catalyses pristanoyl-CoA + H2O = 2,6,10,14-tetramethylpentadecanoate + CoA + H(+). It catalyses the reaction 2,6,10,14-tetramethylpentadecanoate(in) + ATP + H2O = 2,6,10,14-tetramethylpentadecanoate(out) + ADP + phosphate + H(+). It carries out the reaction hexadecanedioyl-CoA + H2O = hexadecanedioate + CoA + H(+). The catalysed reaction is hexadecanedioate(in) + ATP + H2O = hexadecanedioate(out) + ADP + phosphate + H(+). The enzyme catalyses (5Z,8Z,11Z,14Z,17Z)-eicosapentaenoyl-CoA + H2O = (5Z,8Z,11Z,14Z,17Z)-eicosapentaenoate + CoA + H(+). It catalyses the reaction (5Z,8Z,11Z,14Z,17Z)-eicosapentaenoate(in) + ATP + H2O = (5Z,8Z,11Z,14Z,17Z)-eicosapentaenoate(out) + ADP + phosphate + H(+). It carries out the reaction (4Z,7Z,10Z,13Z,16Z,19Z)-docosahexaenoyl-CoA + H2O = (4Z,7Z,10Z,13Z,16Z,19Z)-docosahexaenoate + CoA + H(+). The catalysed reaction is (4Z,7Z,10Z,13Z,16Z,19Z)-docosahexaenoate(in) + ATP + H2O = (4Z,7Z,10Z,13Z,16Z,19Z)-docosahexaenoate(out) + ADP + phosphate + H(+). Functionally, broad substrate specificity ATP-dependent transporter of the ATP-binding cassette (ABC) family that catalyzes the transport of long-chain fatty acids (LCFA)-CoA, dicarboxylic acids-CoA, long-branched-chain fatty acids-CoA and bile acids from the cytosol to the peroxisome lumen for beta-oxydation. Has fatty acyl-CoA thioesterase and ATPase activities. Probably hydrolyzes fatty acyl-CoAs into free fatty acids prior to their ATP-dependent transport into peroxisomes. Thus, play a role in regulation of LCFAs and energy metabolism namely, in the degradation and biosynthesis of fatty acids by beta-oxidation. The sequence is that of ATP-binding cassette sub-family D member 3 (Abcd3) from Mus musculus (Mouse).